Here is a 195-residue protein sequence, read N- to C-terminus: Imidazoleglycerol-phosphate dehydratase (195 aa).

It belongs to the imidazoleglycerol-phosphate dehydratase family.

The protein localises to the cytoplasm. It carries out the reaction D-erythro-1-(imidazol-4-yl)glycerol 3-phosphate = 3-(imidazol-4-yl)-2-oxopropyl phosphate + H2O. It participates in amino-acid biosynthesis; L-histidine biosynthesis; L-histidine from 5-phospho-alpha-D-ribose 1-diphosphate: step 6/9. This Geobacter sulfurreducens (strain ATCC 51573 / DSM 12127 / PCA) protein is Imidazoleglycerol-phosphate dehydratase.